The sequence spans 167 residues: Osteocalcin 2a (167 aa).

A signal peptide spans 1–18; the sequence is MKSLTLLTICAVLSVSLS. The propeptide occupies 19 to 118; it reads MNDLALDVVL…LASVLLRRKR (100 aa). Positions 28–99 are disordered; the sequence is LDPAPDPATE…TTEDPAAATE (72 aa). Low complexity predominate over residues 38–87; sequence PAPAADSSASSSASSSSSSASDSSASASDSSDSDSSSASSSSSSSESASA. Residues 131-163 enclose the Gla domain; sequence QVESLSEVCELNLACEHMAETAGIVAAYTAYYG. 3 residues coordinate Ca(2+): E133, E137, and E140. 4-carboxyglutamate is present on residues E133, E137, and E140. A disulfide bridge links C139 with C145.

This sequence belongs to the osteocalcin/matrix Gla protein family. Post-translationally, gamma-carboxyglutamate residues are formed by vitamin K dependent carboxylation. These residues are essential for the binding of calcium.

The protein resides in the secreted. In terms of biological role, binds strongly to apatite and calcium. This chain is Osteocalcin 2a, found in Oncorhynchus mykiss (Rainbow trout).